A 442-amino-acid polypeptide reads, in one-letter code: D-galactonate dehydratase family member SSLG_02014 (442 aa).

Position 161 (His161) interacts with substrate. The Proton donor/acceptor role is filled by Tyr197. Asp246 lines the Mg(2+) pocket. His248 (proton donor/acceptor) is an active-site residue. Mg(2+)-binding residues include Glu272 and Glu298. 5 residues coordinate substrate: Glu298, Arg319, His348, Asp352, and Glu375.

This sequence belongs to the mandelate racemase/muconate lactonizing enzyme family. GalD subfamily. Mg(2+) serves as cofactor.

It carries out the reaction D-mannonate = 2-dehydro-3-deoxy-D-gluconate + H2O. Has low D-mannonate dehydratase activity (in vitro), suggesting that this is not a physiological substrate and that it has no significant role in D-mannonate degradation in vivo. Has no detectable activity with a panel of 70 other acid sugars (in vitro). This chain is D-galactonate dehydratase family member SSLG_02014, found in Streptomyces sp. (strain SPB78).